A 729-amino-acid polypeptide reads, in one-letter code: Cellulose synthase-like protein E1 (729 aa).

2 consecutive transmembrane segments (helical) span residues 29 to 49 and 64 to 84; these read VIAY…IWFY and LIWF…VVTQ. Residues Asp-152 and Asp-443 contribute to the active site. 5 helical membrane-spanning segments follow: residues 526–546, 553–573, 644–664, 680–700, and 709–729; these read LPVL…IPLF, WFIP…AEFL, MFLV…AAVA, QFVI…GMLL, and MSVT…LAFL.

The protein belongs to the glycosyltransferase 2 family. Plant cellulose synthase-like E subfamily.

It localises to the golgi apparatus membrane. In terms of biological role, thought to be a Golgi-localized beta-glycan synthase that polymerize the backbones of noncellulosic polysaccharides (hemicelluloses) of plant cell wall. The chain is Cellulose synthase-like protein E1 (CSLE1) from Arabidopsis thaliana (Mouse-ear cress).